The primary structure comprises 71 residues: Brevinin-1V (71 aa).

Positions 1 to 22 are cleaved as a signal peptide; it reads MFTLKKSLLLLFFLGTINLSLC. Residues 23 to 45 constitute a propeptide that is removed on maturation; that stretch reads EQERDADEEERRDDSEERDIEVE. A disulfide bridge connects residues C65 and C71.

It belongs to the frog skin active peptide (FSAP) family. Brevinin subfamily. In terms of tissue distribution, expressed by the skin glands.

The protein resides in the secreted. Has antimicrobial activity against Gram-positive bacteria and fungi but has weak or no activity against a range of Gram-negative bacteria except P.faecalis. Active against the Gram-positive bacteria E.faecium 091299 (MIC=37.5 uM), S.aureus ATCC 25923 (MIC=2.4 uM), S.carnosus KHS (MIC=19 uM), B.licheniformis X39 (MIC=2.4 uM) and R.rhodochrous X15 (MIC=1.2 uM) and a lower activity against E.faecalis 981 (MIC=75 uM). Active against the Gram-negative bacterium P.faecalis X29 (MIC=9.5 uM) is virtually inactive against E.coli ATCC 25922 (MIC=150 uM), and inactive against P.aeruginosa and S.typhi. Has antifungal activity against C.albicans ATCC 2002 (MIC=9.5 uM) and is also active against the slime mold 090223 (MIC=1.2 uM). Has low hemolytic activity against human erythrocytes (LC(50)=75 uM). The chain is Brevinin-1V from Odorrana hainanensis (Odor frog).